Here is a 96-residue protein sequence, read N- to C-terminus: Co-chaperonin GroES (96 aa).

It belongs to the GroES chaperonin family. As to quaternary structure, heptamer of 7 subunits arranged in a ring. Interacts with the chaperonin GroEL.

The protein resides in the cytoplasm. Functionally, together with the chaperonin GroEL, plays an essential role in assisting protein folding. The GroEL-GroES system forms a nano-cage that allows encapsulation of the non-native substrate proteins and provides a physical environment optimized to promote and accelerate protein folding. GroES binds to the apical surface of the GroEL ring, thereby capping the opening of the GroEL channel. This Nitrosomonas eutropha (strain DSM 101675 / C91 / Nm57) protein is Co-chaperonin GroES.